Here is a 324-residue protein sequence, read N- to C-terminus: MKPQPLLLIAIALLCCCVTDEGDKITSLGKIADESIVYVWWSVKAEDRVYLGLGTVDGTSFAEFHPPNRLEILLSSEDFSQREAAVWDGEEILIFGGTVFENGKYSPTDQILSFNPKLERLRVLNASLPHPTSDVAAVWGDSRVYIFLNNSERCEVYAFYPSNESFAKLDVSCPIEHPGGCVHSVVWYGGKAYFFCGEGVASFDPMGGFKWIAFTDRVWVRAATVADGYIFAIGGSSGIAETKDEIIRFNPKTGELCEMRTKLPVARGQAVAVGGEYIYIFGGYTKDGYANEILRYDYRGDKCVNFIQLLNDDVKKYRPNNGKQ.

Kelch repeat units lie at residues 229–276 (YIFA…VGGE) and 277–323 (YIYI…NNGK).

In Archaeoglobus fulgidus (strain ATCC 49558 / DSM 4304 / JCM 9628 / NBRC 100126 / VC-16), this protein is Kelch domain-containing protein AF_2170.